A 154-amino-acid polypeptide reads, in one-letter code: 6,7-dimethyl-8-ribityllumazine synthase (154 aa).

5-amino-6-(D-ribitylamino)uracil is bound by residues Phe26, 60–62 (ALE), and 84–86 (CII). 89 to 90 (ET) contacts (2S)-2-hydroxy-3-oxobutyl phosphate. His92 acts as the Proton donor in catalysis. Asn117 provides a ligand contact to 5-amino-6-(D-ribitylamino)uracil. Arg131 contacts (2S)-2-hydroxy-3-oxobutyl phosphate.

It belongs to the DMRL synthase family.

The enzyme catalyses (2S)-2-hydroxy-3-oxobutyl phosphate + 5-amino-6-(D-ribitylamino)uracil = 6,7-dimethyl-8-(1-D-ribityl)lumazine + phosphate + 2 H2O + H(+). It functions in the pathway cofactor biosynthesis; riboflavin biosynthesis; riboflavin from 2-hydroxy-3-oxobutyl phosphate and 5-amino-6-(D-ribitylamino)uracil: step 1/2. In terms of biological role, catalyzes the formation of 6,7-dimethyl-8-ribityllumazine by condensation of 5-amino-6-(D-ribitylamino)uracil with 3,4-dihydroxy-2-butanone 4-phosphate. This is the penultimate step in the biosynthesis of riboflavin. In Paracidovorax citrulli (strain AAC00-1) (Acidovorax citrulli), this protein is 6,7-dimethyl-8-ribityllumazine synthase.